We begin with the raw amino-acid sequence, 101 residues long: NADH-quinone oxidoreductase subunit K (101 aa).

Transmembrane regions (helical) follow at residues Leu-4 to Leu-24, Ile-30 to Phe-50, and Ile-61 to Leu-81.

Belongs to the complex I subunit 4L family. NDH-1 is composed of 14 different subunits. Subunits NuoA, H, J, K, L, M, N constitute the membrane sector of the complex.

The protein resides in the cell inner membrane. The catalysed reaction is a quinone + NADH + 5 H(+)(in) = a quinol + NAD(+) + 4 H(+)(out). In terms of biological role, NDH-1 shuttles electrons from NADH, via FMN and iron-sulfur (Fe-S) centers, to quinones in the respiratory chain. The immediate electron acceptor for the enzyme in this species is believed to be ubiquinone. Couples the redox reaction to proton translocation (for every two electrons transferred, four hydrogen ions are translocated across the cytoplasmic membrane), and thus conserves the redox energy in a proton gradient. This is NADH-quinone oxidoreductase subunit K from Nitrosomonas europaea (strain ATCC 19718 / CIP 103999 / KCTC 2705 / NBRC 14298).